A 232-amino-acid polypeptide reads, in one-letter code: Dysfunctional anti-sigma-K factor RskA (232 aa).

Topologically, residues 1–90 (MTEHTDFELL…EVRRQSRWRT (90 aa)) are cytoplasmic. A helical transmembrane segment spans residues 91–111 (AAFASAAAIAVGLGAFDLGVL). At 112 to 232 (TRPSPPPTVA…GTILAELPLG (121 aa)) the chain is on the extracellular side.

It belongs to the anti-sigma-K factor family.

The protein localises to the cell membrane. In terms of biological role, an anti-sigma factor for extracytoplasmic function (ECF) sigma factor SigK. ECF sigma factors are held in an inactive form by an anti-sigma factor until released by regulated intramembrane proteolysis (RIP). However, in M.bovis this protein is probably dysfunctional, due to at least 1 of the 2 naturally occurring polymorphisms in its gene, when compared to M.tuberculosis. This leads to an increased expression of SigK-regulated genes, such as mpb70 and mpb83. RIP occurs when an extracytoplasmic signal triggers a concerted proteolytic cascade to transmit information and elicit cellular responses. The membrane-spanning regulatory substrate protein is first cut extracytoplasmically (site-1 protease, S1P), then within the membrane itself (site-2 protease, S2P, Rip1), while cytoplasmic proteases finish degrading the regulatory protein, liberating the sigma factor. The protein is Dysfunctional anti-sigma-K factor RskA (rskA) of Mycobacterium bovis (strain ATCC BAA-935 / AF2122/97).